The following is a 489-amino-acid chain: Probable 26S proteasome non-ATPase regulatory subunit 3 (489 aa).

The disordered stretch occupies residues 1–23 (MTQDVEMKEVPAPAPSNSVTAAT). The 182-residue stretch at 241 to 422 (CRYLFYLGKI…GWMVSKETGD (182 aa)) folds into the PCI domain. The segment at 454–489 (PANSHKDKESAEKRRERQQQEQELAKHIAEEDDDEF) is disordered. Over residues 457–482 (SHKDKESAEKRRERQQQEQELAKHIA) the composition is skewed to basic and acidic residues.

This sequence belongs to the proteasome subunit S3 family. The 26S proteasome is composed of a core protease, known as the 20S proteasome, capped at one or both ends by the 19S regulatory complex (RC). The RC is composed of at least 18 different subunits in two subcomplexes, the base and the lid, which form the portions proximal and distal to the 20S proteolytic core, respectively.

The protein resides in the nucleus. Its function is as follows. Acts as a regulatory subunit of the 26 proteasome which is involved in the ATP-dependent degradation of ubiquitinated proteins. The protein is Probable 26S proteasome non-ATPase regulatory subunit 3 (21D7) of Daucus carota (Wild carrot).